A 331-amino-acid chain; its full sequence is UPF0284 protein PF0303 (331 aa).

Belongs to the UPF0284 family.

The polypeptide is UPF0284 protein PF0303 (Pyrococcus furiosus (strain ATCC 43587 / DSM 3638 / JCM 8422 / Vc1)).